We begin with the raw amino-acid sequence, 737 residues long: Autophagy-related protein 22 (737 aa).

The interval 115–154 is disordered; the sequence is RMSPANAGDNSDSYPYGDDTDGDSSSGLPPPRYPGDDTRP. Positions 125 to 141 are enriched in low complexity; sequence SDSYPYGDDTDGDSSSG. The next 4 helical transmembrane spans lie at 166 to 186, 232 to 252, 264 to 284, and 289 to 309; these read YAFA…PILL, SFAM…VVSI, KLLL…IFIS, and LIGA…FVLL. Positions 327–353 are disordered; it reads GDYGSPGYATTEEGDDEDDEYQEDSTR. Acidic residues predominate over residues 338–349; it reads EEGDDEDDEYQE. An N-linked (GlcNAc...) asparagine glycan is attached at N354. The helical transmembrane segment at 395-415 threads the bilayer; the sequence is GIGIGYIAGLFLQCVAIAILI. A glycan (N-linked (GlcNAc...) asparagine) is linked at N419. Transmembrane regions (helical) follow at residues 426–446, 487–507, 524–544, 559–579, 593–613, 632–652, and 661–681; these read IVLC…AMWL, LVDI…IATT, WALG…AFSW, ILAC…GYLP, WEMY…SGYC, LYAI…GAII, and AFWF…FINV.

This sequence belongs to the ATG22 family.

Its subcellular location is the vacuole membrane. Functionally, vacuolar effluxer which mediate the efflux of amino acids resulting from autophagic degradation. The release of autophagic amino acids allows the maintenance of protein synthesis and viability during nitrogen starvation. The protein is Autophagy-related protein 22 (apg-11) of Neurospora crassa (strain ATCC 24698 / 74-OR23-1A / CBS 708.71 / DSM 1257 / FGSC 987).